A 505-amino-acid chain; its full sequence is RNA-splicing ligase RtcB homolog (505 aa).

Residues Asp119, Cys122, His227, His259, and His353 each contribute to the Mn(2+) site. 226–230 contributes to the GMP binding site; sequence NHYAE. GMP contacts are provided by residues 353-354, 402-405, Ser409, 428-431, and Lys504; these read HN, GGTM, and HGAG. The active-site GMP-histidine intermediate is the His428.

Belongs to the RtcB family. Catalytic component of the tRNA-splicing ligase complex. Requires Mn(2+) as cofactor.

It localises to the nucleus. It is found in the cytoplasm. The catalysed reaction is a 3'-end 3'-phospho-ribonucleotide-RNA + a 5'-end dephospho-ribonucleoside-RNA + GTP = a ribonucleotidyl-ribonucleotide-RNA + GMP + diphosphate. It carries out the reaction a 3'-end 2',3'-cyclophospho-ribonucleotide-RNA + a 5'-end dephospho-ribonucleoside-RNA + GTP + H2O = a ribonucleotidyl-ribonucleotide-RNA + GMP + diphosphate + H(+). Functionally, catalytic subunit of the tRNA-splicing ligase complex that acts by directly joining spliced tRNA halves to mature-sized tRNAs by incorporating the precursor-derived splice junction phosphate into the mature tRNA as a canonical 3',5'-phosphodiester. May act as an RNA ligase with broad substrate specificity, and may function toward other RNAs. The chain is RNA-splicing ligase RtcB homolog from Danio rerio (Zebrafish).